The sequence spans 997 residues: Sarcoplasmic/endoplasmic reticulum calcium ATPase 2 (997 aa).

At 1–48 (MENAHTKTVEEVLGYFGVNESTGLSLEQVKKLKERWGSNELPAEEGKT) the chain is on the cytoplasmic side. Residue S38 is modified to Phosphoserine. The chain crosses the membrane as a helical span at residues 49–69 (LLELVIEQFEDLLVRILLLAA). Residues 70–89 (CISFVLAWFEEGEETITAFV) lie on the Lumenal side of the membrane. A helical membrane pass occupies residues 90–110 (EPFVILLILVANAIVGVWQER). At 111–253 (NAENAIEALK…QERTPLQQKL (143 aa)) the chain is on the cytoplasmic side. A helical membrane pass occupies residues 254 to 273 (DEFGEQLSKVISLICIAVWI). Residues 274–295 (INIGHFNDPVHGGSWIRGAIYY) lie on the Lumenal side of the membrane. 3'-nitrotyrosine is present on residues Y294 and Y295. The helical transmembrane segment at 296 to 313 (FKIAVALAVAAIPEGLPA) threads the bilayer. Ca(2+) contacts are provided by V304, A305, I307, and E309. Residues 314–756 (VITTCLALGT…EEGRAIYNNM (443 aa)) lie on the Cytoplasmic side of the membrane. Residue D351 is the 4-aspartylphosphate intermediate of the active site. Residues D351 and T353 each coordinate Mg(2+). T353 contributes to the ATP binding site. T441 bears the Phosphothreonine mark. ATP contacts are provided by E442, R489, and K514. Position 531 is a phosphoserine (S531). R559 contributes to the ATP binding site. Positions 575–594 (MNLEDSANFIKYETNLTFVG) are interaction with HAX1. Position 580 is a phosphoserine (S580). 3 residues coordinate ATP: T624, G625, and D626. S661 and S663 each carry phosphoserine. ATP is bound by residues R677 and K683. D702 serves as a coordination point for Mg(2+). ATP is bound at residue N705. The helical transmembrane segment at 757 to 776 (KQFIRYLISSNVGEVVCIFL) threads the bilayer. 2 residues coordinate Ca(2+): N767 and E770. The Lumenal portion of the chain corresponds to 777-786 (TAALGFPEAL). The helical transmembrane segment at 787-807 (IPVQLLWVNLVTDGLPATALG) threads the bilayer. The segment at 787–807 (IPVQLLWVNLVTDGLPATALG) is interaction with PLN. The segment at 788–997 (PVQLLWVNLV…RNYLEPAILE (210 aa)) is interaction with TMEM64 and PDIA3. Residues N795, T798, and D799 each contribute to the Ca(2+) site. Over 808-827 (FNPPDLDIMNKPPRNPKEPL) the chain is Cytoplasmic. The helical transmembrane segment at 828 to 850 (ISGWLFFRYLAIGCYVGAATVGA) threads the bilayer. The Lumenal portion of the chain corresponds to 851-896 (AAWWFIAADGGPRVSFYQLSHFLQCKDDNPDFEGVDCAIFESPYPM). C875 and C887 are disulfide-bonded. The chain crosses the membrane as a helical span at residues 897–916 (TMALSVLVTIEMCNALNSLS). E907 provides a ligand contact to Ca(2+). Topologically, residues 917-929 (ENQSLLRMPPWEN) are cytoplasmic. A helical membrane pass occupies residues 930-948 (IWLVGSICLSMSLHFLILY). The segment at 931–942 (WLVGSICLSMSL) is interaction with PLN. Residues 949 to 963 (VEPLPLIFQITPLNL) are Lumenal-facing. Residues 964 to 984 (TQWLMVLKISLPVILMDETLK) form a helical membrane-spanning segment. Residues 985-997 (FVARNYLEPAILE) are Cytoplasmic-facing.

Belongs to the cation transport ATPase (P-type) (TC 3.A.3) family. Type IIA subfamily. As to quaternary structure, interacts with sarcolipin (SLN); the interaction inhibits ATP2A2 Ca(2+) affinity. Interacts with phospholamban (PLN); the interaction inhibits ATP2A2 Ca(2+) affinity. Interacts with myoregulin (MRLN). Interacts with ARLN and ERLN; the interactions inhibit ATP2A2 Ca(2+) affinity. Interacts with STRIT1/DWORF; the interaction results in activation of ATP2A2. Interacts with the monomeric forms of SLN, PLN, ARLN, ERLN and STRI1/DWORF. Interacts with HAX1. Interacts with S100A8 and S100A9. Interacts with SLC35G1 and STIM1. Interacts with TMEM203. Interacts with TMEM64 and PDIA3. Interacts with TMX1. Interacts with TMX2. Interacts with VMP1; VMP1 competes with PLN and SLN to prevent them from forming an inhibitory complex with ATP2A2. Interacts with ULK1. Interacts with S100A1 in a Ca(2+)-dependent manner. Interacts with TUNAR. Interacts with FLVCR2; this interaction occurs in the absence of heme and promotes ATP2A2 proteasomal degradation; this complex is dissociated upon heme binding. Interacts with FNIP1. Interacts with TRAM2 (via C-terminus). Mg(2+) serves as cofactor. In terms of processing, nitrated under oxidative stress. Nitration on the two tyrosine residues inhibits catalytic activity. Post-translationally, serotonylated on Gln residues by TGM2 in response to hypoxia, leading to its inactivation. In terms of tissue distribution, isoform 1 is expressed in the heart.

The protein resides in the endoplasmic reticulum membrane. Its subcellular location is the sarcoplasmic reticulum membrane. It catalyses the reaction Ca(2+)(in) + ATP + H2O = Ca(2+)(out) + ADP + phosphate + H(+). Its activity is regulated as follows. Has different conformational states with differential Ca2+ affinity. The E1 conformational state (active form) shows high Ca(2+) affinity, while the E2 state exhibits low Ca(2+) affinity. Binding of ATP allosterically increases its affinity for subsequent binding of Ca2+. Reversibly inhibited by phospholamban (PLN) at low calcium concentrations. PLN inhibits ATP2A2 Ca(2+) affinity by disrupting its allosteric activation by ATP. Inhibited by sarcolipin (SLN) and myoregulin (MRLN). The inhibition is blocked by VMP1. Enhanced by STRIT1/DWORF; STRIT1 increases activity by displacing sarcolipin (SLN), phospholamban (PLN) and myoregulin (MRLN). Stabilizes SERCA2 in its E2 state. Its function is as follows. This magnesium-dependent enzyme catalyzes the hydrolysis of ATP coupled with the translocation of calcium from the cytosol to the sarcoplasmic reticulum lumen. Involved in autophagy in response to starvation. Upon interaction with VMP1 and activation, controls ER-isolation membrane contacts for autophagosome formation. Also modulates ER contacts with lipid droplets, mitochondria and endosomes. In coordination with FLVCR2 mediates heme-stimulated switching from mitochondrial ATP synthesis to thermogenesis. In terms of biological role, involved in the regulation of the contraction/relaxation cycle. Acts as a regulator of TNFSF11-mediated Ca(2+) signaling pathways via its interaction with TMEM64 which is critical for the TNFSF11-induced CREB1 activation and mitochondrial ROS generation necessary for proper osteoclast generation. Association between TMEM64 and SERCA2 in the ER leads to cytosolic Ca(2+) spiking for activation of NFATC1 and production of mitochondrial ROS, thereby triggering Ca(2+) signaling cascades that promote osteoclast differentiation and activation. The sequence is that of Sarcoplasmic/endoplasmic reticulum calcium ATPase 2 (ATP2A2) from Felis catus (Cat).